The sequence spans 311 residues: Malate dehydrogenase (311 aa).

NAD(+)-binding positions include 7-13 (GAAGGIG) and aspartate 34. Residues arginine 81 and arginine 87 each contribute to the substrate site. Residues asparagine 94 and 117–119 (ITN) contribute to the NAD(+) site. 2 residues coordinate substrate: asparagine 119 and arginine 153. Residue histidine 177 is the Proton acceptor of the active site. Residue methionine 227 participates in NAD(+) binding.

Belongs to the LDH/MDH superfamily. MDH type 1 family. As to quaternary structure, homodimer.

It catalyses the reaction (S)-malate + NAD(+) = oxaloacetate + NADH + H(+). In terms of biological role, catalyzes the reversible oxidation of malate to oxaloacetate. This Colwellia psychrerythraea (strain 34H / ATCC BAA-681) (Vibrio psychroerythus) protein is Malate dehydrogenase.